A 367-amino-acid polypeptide reads, in one-letter code: MRKYHSNIMHKIITFVSLLWTFVVCDEISLHTSSSPPPLSSPVPVLYYNLDQSEIYFKHFLQQYNKSYDDPKEYQYRYNVFKDNLNKINSQNRENLLNNKNNNDSLSTSAQFGVNKFSDKTPDEVLHSNTGFFLNLSQHYTLCENRIVKGAPDIRLPDYYDWRDTNKVTPIKDQGVCGSCWAFVAIGNIESQYAIRHNKLIDLSEQQLLDCDEVDLGCNGGLMHLAFQELLLMGGVETEADYPYQGSEQMCTLDNRKIAVKLNSCFKYDIRDENKLKELVYTTGPVAIAVDAMDIINYRRGILNQCHIYDLNHAVLLIGWGIENNVPYWIIKNSWGEDWGENGFLRVRRNVNACGLLNEFGASSVIQ.

The signal sequence occupies residues methionine 1–cysteine 25. Positions aspartate 26–leucine 156 are cleaved as a propeptide — activation peptide. Asparagine 103 and asparagine 135 each carry an N-linked (GlcNAc...) asparagine; by host glycan. 3 disulfides stabilise this stretch: cysteine 177–cysteine 218, cysteine 211–cysteine 251, and cysteine 306–cysteine 354. Cysteine 180 is an active-site residue. Active-site residues include histidine 313 and asparagine 333.

The protein belongs to the peptidase C1 family. Post-translationally, synthesized as an inactive proenzyme and activated by proteolytic removal of the inhibitory propeptide.

The catalysed reaction is Endopeptidase of broad specificity, hydrolyzing substrates of both cathepsin L and cathepsin B.. Cysteine protease that plays an essential role in host liquefaction to facilitate horizontal transmission of the virus. May participate in the degradation of foreign protein expressed by the baculovirus system. This is Viral cathepsin (VCATH) from Lepidoptera (butterflies and moths).